Here is a 151-residue protein sequence, read N- to C-terminus: Odorant-binding protein (151 aa).

2 cysteine pairs are disulfide-bonded: C38/C42 and C57/C149.

The protein belongs to the calycin superfamily. Lipocalin family. As to expression, expressed in salivary glands, hair and urine.

It localises to the secreted. May act as a pheromone. This is Odorant-binding protein from Phodopus sungorus (Striped hairy-footed hamster).